Consider the following 741-residue polypeptide: MALRDTSIPEPSGPVPPAPGACATAPPLDPTDRGRLLAGAHHDPHSLLGAHPVPGGIAFRVLRPFAREVGVVVDGERHTLASEEDGLFSGVLPLAGIPSYTLVVAYEQGETQETHDPYRFLPALGELDLHLIGEGRHEQLWQALGAEPMTHEGVTGTRFTVWAPNAQGVRVATDFTHWDGTAFPMRSLGSSGVWELFLPGVGEGTRYKFEIHSRYGHRFLKADPMARAAEEPPNTASVVTASRYEWGDAQWMRTRADTPVHEAPFSVYEVHLPSWRPGLTYRELAEELPAYVKDLGFTHVELMPVAEHPYGPSWGYQVTGFYAPTARLGSPDDFRFLVDALHRAGIGVIMDWVPAHFPKDDWALGRFDGDPLYEPGDSRRAEHPDWGTYTFDFARTEVRNFLVANAVYWCEEFHIDGLRVDAVASMLYLDYSRDSGQWEPNQYGGREDLAAMAFLQEMNATVYRRCPGVVTIAEESTAWGGVTRPTDTGGLGFGLKWNMGWMHDSLEYVAHEPVHRRYHHHEMTFSMVYAYSENYVLPISHDEVVHGKQALVSKMPGDWWQRRANVRAYLGFMWAHPGKQLLFMGQEFAQGAEWSEKQGPEWWLLDEGYHSAGDHRGVQDLVRELNTRYTRTPALWQRDTDPAGFRWVSVDAAEDNVFAFLRYGTDGTPLLAVSNFSPVVRHEYGLAVGDEAVAWQEVLNTDAEEYGGGGVGNPDPVKPEDGSIRITLPPLATVWLMPYAL.

The interval 1-38 is disordered; that stretch reads MALRDTSIPEPSGPVPPAPGACATAPPLDPTDRGRLLA. Asp421 serves as the catalytic Nucleophile. The active-site Proton donor is the Glu474.

This sequence belongs to the glycosyl hydrolase 13 family. GlgB subfamily. As to quaternary structure, monomer.

The enzyme catalyses Transfers a segment of a (1-&gt;4)-alpha-D-glucan chain to a primary hydroxy group in a similar glucan chain.. The protein operates within glycan biosynthesis; glycogen biosynthesis. Catalyzes the formation of the alpha-1,6-glucosidic linkages in glycogen by scission of a 1,4-alpha-linked oligosaccharide from growing alpha-1,4-glucan chains and the subsequent attachment of the oligosaccharide to the alpha-1,6 position. This is 1,4-alpha-glucan branching enzyme GlgB 2 (glgB2) from Streptomyces coelicolor (strain ATCC BAA-471 / A3(2) / M145).